The following is an 802-amino-acid chain: Oligophrenin-1 (802 aa).

A PH domain is found at 265-368 (QPTIEGYLYT…WMEAMDGKEP (104 aa)). A Rho-GAP domain is found at 380–564 (MELNEVGFKF…ILIEHFGKIY (185 aa)). Disordered regions lie at residues 569–588 (EESAAPPVPPPRVTARRHKP), 607–666 (LDES…EPCP), 680–770 (GGTK…NAGE), and 783–802 (FETASRKTGSSQGRLPGDES). Positions 616–627 (HQTPNGTITSSI) are enriched in polar residues. Over residues 716-732 (HHKEGDADSFSKVRPPG) the composition is skewed to basic and acidic residues.

In terms of assembly, interacts with HOMER1. Interacts with AMPA receptor complexes. Interacts with SH3GL2 (endophilin-A1). Interacts (via C-terminus) with NR1D1. As to expression, expressed in brain.

It localises to the postsynapse. The protein localises to the presynapse. It is found in the cell projection. The protein resides in the axon. Its subcellular location is the dendritic spine. It localises to the dendrite. The protein localises to the cytoplasm. Functionally, stimulates GTP hydrolysis of members of the Rho family. Its action on RHOA activity and signaling is implicated in growth and stabilization of dendritic spines, and therefore in synaptic function. Critical for the stabilization of AMPA receptors at postsynaptic sites. Critical for the regulation of synaptic vesicle endocytosis at presynaptic terminals. Required for the localization of NR1D1 to dendrites, can suppress its repressor activity and protect it from proteasomal degradation. The polypeptide is Oligophrenin-1 (OPHN1) (Homo sapiens (Human)).